The chain runs to 258 residues: Axonemal dynein light intermediate polypeptide 1 (258 aa).

Disordered regions lie at residues 1–60 (MIPP…CVPD) and 207–231 (VNEQ…EEKK). A compositionally biased stretch (low complexity) spans 34–44 (SPQQPGPSGSA). Residues 176-255 (MRKALQAEQG…LKAQLEGIIA (80 aa)) are a coiled coil.

Belongs to the inner dynein arm light chain family. In terms of assembly, interacts with CFAP45. Interacts with DYNC1H1. As to expression, expressed in many tissues. A smaller 0.9 kb and a larger 2.5 kb transcripts were detected at the highest level in the testis, at medium levels in the prostate, heart, liver, lung and pancreas, at low levels in the ovary, skeletal muscle and small intestine. Not detected in spleen, colon epithelium, thymus or peripheral blood leukocytes. The 0.9 kb transcript is expressed at a 20-fold higher level than the 2.5 kb transcript in the testis. Expressed in spermatozoa and airway epithelial cells (at protein level).

The protein localises to the cell projection. It is found in the cilium. The protein resides in the flagellum. It localises to the dynein axonemal particle. Its subcellular location is the cytoplasm. Functionally, involved in sperm flagellum assembly. The sequence is that of Axonemal dynein light intermediate polypeptide 1 from Homo sapiens (Human).